Reading from the N-terminus, the 775-residue chain is Minichromosome maintenance protein 5 (775 aa).

The disordered stretch occupies residues Met-1–Asp-22. An MCM domain is found at Leu-366 to Ile-573. Gly-416 to Ser-423 is an ATP binding site. The Arginine finger motif lies at Ser-548–Asp-551.

The protein belongs to the MCM family. As to quaternary structure, component of the MCM2-7 complex. The complex forms a toroidal hexameric ring with the proposed subunit order MCM2-MCM6-MCM4-MCM7-MCM3-MCM5; loaded onto DNA, forms a head-head double hexamer. Interacts with CSM1.

The protein localises to the nucleus. The enzyme catalyses ATP + H2O = ADP + phosphate + H(+). Acts as a component of the MCM2-7 complex (MCM complex) which is the putative replicative helicase essential for 'once per cell cycle' DNA replication initiation and elongation in eukaryotic cells. The active ATPase sites in the MCM2-7 ring are formed through the interaction surfaces of two neighboring subunits such that a critical structure of a conserved arginine finger motif is provided in trans relative to the ATP-binding site of the Walker A box of the adjacent subunit. The six ATPase active sites, however, are likely to contribute differentially to the complex helicase activity; specifically the MCM2-MCM5 association is proposed to be reversible and to mediate a open ring conformation which may facilitate DNA loading. Once loaded onto DNA, double hexamers can slide on dsDNA in the absence of ATPase activity. This chain is Minichromosome maintenance protein 5 (MCM5), found in Saccharomyces cerevisiae (strain ATCC 204508 / S288c) (Baker's yeast).